The following is a 603-amino-acid chain: Proline--tRNA ligase (603 aa).

This sequence belongs to the class-II aminoacyl-tRNA synthetase family. ProS type 1 subfamily. In terms of assembly, homodimer.

It localises to the cytoplasm. The catalysed reaction is tRNA(Pro) + L-proline + ATP = L-prolyl-tRNA(Pro) + AMP + diphosphate. Its function is as follows. Catalyzes the attachment of proline to tRNA(Pro) in a two-step reaction: proline is first activated by ATP to form Pro-AMP and then transferred to the acceptor end of tRNA(Pro). As ProRS can inadvertently accommodate and process non-cognate amino acids such as alanine and cysteine, to avoid such errors it has two additional distinct editing activities against alanine. One activity is designated as 'pretransfer' editing and involves the tRNA(Pro)-independent hydrolysis of activated Ala-AMP. The other activity is designated 'posttransfer' editing and involves deacylation of mischarged Ala-tRNA(Pro). The misacylated Cys-tRNA(Pro) is not edited by ProRS. This chain is Proline--tRNA ligase, found in Paenarthrobacter aurescens (strain TC1).